Consider the following 260-residue polypeptide: NADH-ubiquinone oxidoreductase chain 6 (260 aa).

6 helical membrane passes run 2–22, 30–50, 52–72, 101–121, 142–162, and 211–231; these read LTNY…FMII, SILY…ILGV, FIAI…FLFV, FLFQ…FGLF, VPSG…NLGI, and FFIF…SIIL.

Belongs to the complex I subunit 6 family.

The protein localises to the mitochondrion membrane. The catalysed reaction is a ubiquinone + NADH + 5 H(+)(in) = a ubiquinol + NAD(+) + 4 H(+)(out). In terms of biological role, core subunit of the mitochondrial membrane respiratory chain NADH dehydrogenase (Complex I) that is believed to belong to the minimal assembly required for catalysis. Complex I functions in the transfer of electrons from NADH to the respiratory chain. The immediate electron acceptor for the enzyme is believed to be ubiquinone. This chain is NADH-ubiquinone oxidoreductase chain 6 (ND6), found in Acanthamoeba castellanii (Amoeba).